Reading from the N-terminus, the 154-residue chain is 6,7-dimethyl-8-ribityllumazine synthase (154 aa).

Residues F22, 56 to 58 (AFE), and 80 to 82 (TVI) each bind 5-amino-6-(D-ribitylamino)uracil. 85 to 86 (AT) contributes to the (2S)-2-hydroxy-3-oxobutyl phosphate binding site. Residue H88 is the Proton donor of the active site. F113 provides a ligand contact to 5-amino-6-(D-ribitylamino)uracil. Residue R127 coordinates (2S)-2-hydroxy-3-oxobutyl phosphate.

It belongs to the DMRL synthase family. In terms of assembly, forms an icosahedral capsid composed of 60 subunits, arranged as a dodecamer of pentamers.

The enzyme catalyses (2S)-2-hydroxy-3-oxobutyl phosphate + 5-amino-6-(D-ribitylamino)uracil = 6,7-dimethyl-8-(1-D-ribityl)lumazine + phosphate + 2 H2O + H(+). It participates in cofactor biosynthesis; riboflavin biosynthesis; riboflavin from 2-hydroxy-3-oxobutyl phosphate and 5-amino-6-(D-ribitylamino)uracil: step 1/2. Its function is as follows. Catalyzes the formation of 6,7-dimethyl-8-ribityllumazine by condensation of 5-amino-6-(D-ribitylamino)uracil with 3,4-dihydroxy-2-butanone 4-phosphate. This is the penultimate step in the biosynthesis of riboflavin. The chain is 6,7-dimethyl-8-ribityllumazine synthase from Bacillus pumilus (strain SAFR-032).